A 397-amino-acid polypeptide reads, in one-letter code: Riboflavin biosynthesis protein RibBA (397 aa).

The interval 1–199 (MFHRIEEALE…IEDLIAYRRH (199 aa)) is DHBP synthase. Residues 26 to 27 (RE), Asp-31, 138 to 142 (RAGHT), and Glu-162 contribute to the D-ribulose 5-phosphate site. A Mg(2+)-binding site is contributed by Glu-27. Residue His-141 coordinates Mg(2+). Positions 200–397 (HETLVTREVE…VNKLGHLLNL (198 aa)) are GTP cyclohydrolase II. Residue 250–254 (RVHSE) participates in GTP binding. Zn(2+)-binding residues include Cys-255, Cys-266, and Cys-268. Residues Gln-271, 293–295 (EGR), and Thr-315 contribute to the GTP site. Asp-327 serves as the catalytic Proton acceptor; for GTP cyclohydrolase activity. The Nucleophile; for GTP cyclohydrolase activity role is filled by Arg-329. Residues Thr-350 and Lys-355 each coordinate GTP.

The protein in the N-terminal section; belongs to the DHBP synthase family. This sequence in the C-terminal section; belongs to the GTP cyclohydrolase II family. Mg(2+) is required as a cofactor. It depends on Mn(2+) as a cofactor. Zn(2+) serves as cofactor.

It catalyses the reaction D-ribulose 5-phosphate = (2S)-2-hydroxy-3-oxobutyl phosphate + formate + H(+). The catalysed reaction is GTP + 4 H2O = 2,5-diamino-6-hydroxy-4-(5-phosphoribosylamino)-pyrimidine + formate + 2 phosphate + 3 H(+). It participates in cofactor biosynthesis; riboflavin biosynthesis; 2-hydroxy-3-oxobutyl phosphate from D-ribulose 5-phosphate: step 1/1. Its pathway is cofactor biosynthesis; riboflavin biosynthesis; 5-amino-6-(D-ribitylamino)uracil from GTP: step 1/4. Catalyzes the conversion of D-ribulose 5-phosphate to formate and 3,4-dihydroxy-2-butanone 4-phosphate. In terms of biological role, catalyzes the conversion of GTP to 2,5-diamino-6-ribosylamino-4(3H)-pyrimidinone 5'-phosphate (DARP), formate and pyrophosphate. The chain is Riboflavin biosynthesis protein RibBA from Bacillus cereus (strain B4264).